Consider the following 375-residue polypeptide: Probable aminomethyltransferase (375 aa).

Belongs to the GcvT family. The glycine cleavage system is composed of four proteins: P, T, L and H.

The enzyme catalyses N(6)-[(R)-S(8)-aminomethyldihydrolipoyl]-L-lysyl-[protein] + (6S)-5,6,7,8-tetrahydrofolate = N(6)-[(R)-dihydrolipoyl]-L-lysyl-[protein] + (6R)-5,10-methylene-5,6,7,8-tetrahydrofolate + NH4(+). Functionally, the glycine cleavage system catalyzes the degradation of glycine. The polypeptide is Probable aminomethyltransferase (Aeropyrum pernix (strain ATCC 700893 / DSM 11879 / JCM 9820 / NBRC 100138 / K1)).